The primary structure comprises 179 residues: Auxin-induced protein IAA6 (179 aa).

Positions 13–17 match the EAR-like (transcriptional repression) motif; sequence LRLGL. Residues 31-52 form a disordered region; the sequence is FSEIDGGVEENGGSGDRKSVDK. The PB1 domain maps to 75–163; the sequence is KMYMKVSMDG…KRLRIMKRSD (89 aa).

It belongs to the Aux/IAA family. As to quaternary structure, homodimers and heterodimers.

It localises to the nucleus. Its function is as follows. Aux/IAA proteins are short-lived transcriptional factors that function as repressors of early auxin response genes at low auxin concentrations. Repression is thought to result from the interaction with auxin response factors (ARFs), proteins that bind to the auxin-responsive promoter element (AuxRE). Formation of heterodimers with ARF proteins may alter their ability to modulate early auxin response genes expression. The polypeptide is Auxin-induced protein IAA6 (IAA6) (Pisum sativum (Garden pea)).